A 360-amino-acid chain; its full sequence is GTPase Obg (360 aa).

In terms of domain architecture, Obg spans 1 to 156; that stretch reads MFVDSVEIII…KCVRLELKLI (156 aa). One can recognise an OBG-type G domain in the interval 157–360; it reads ADIGLVGFPN…LKFVLLEALP (204 aa). GTP is bound by residues 163-170, 188-192, 210-213, 279-282, and 341-343; these read GFPNAGKS, FTTLV, DIPG, NKCD, and SAV. 2 residues coordinate Mg(2+): Ser170 and Thr190.

The protein belongs to the TRAFAC class OBG-HflX-like GTPase superfamily. OBG GTPase family. As to quaternary structure, monomer. Requires Mg(2+) as cofactor.

It is found in the cytoplasm. An essential GTPase which binds GTP, GDP and possibly (p)ppGpp with moderate affinity, with high nucleotide exchange rates and a fairly low GTP hydrolysis rate. Plays a role in control of the cell cycle, stress response, ribosome biogenesis and in those bacteria that undergo differentiation, in morphogenesis control. This chain is GTPase Obg, found in Helicobacter acinonychis (strain Sheeba).